A 136-amino-acid polypeptide reads, in one-letter code: Peptide methionine sulfoxide reductase MsrB (136 aa).

The MsrB domain occupies 6-128 (EVSLYKELTD…NSAALSFTDE (123 aa)). Zn(2+) contacts are provided by Cys-45, Cys-48, Cys-94, and Cys-97. The active-site Nucleophile is the Cys-117.

It belongs to the MsrB Met sulfoxide reductase family. Zn(2+) is required as a cofactor.

It carries out the reaction L-methionyl-[protein] + [thioredoxin]-disulfide + H2O = L-methionyl-(R)-S-oxide-[protein] + [thioredoxin]-dithiol. This is Peptide methionine sulfoxide reductase MsrB from Photorhabdus laumondii subsp. laumondii (strain DSM 15139 / CIP 105565 / TT01) (Photorhabdus luminescens subsp. laumondii).